The primary structure comprises 240 residues: 4-hydroxy-tetrahydrodipicolinate reductase (240 aa).

NAD(+) contacts are provided by residues 79-81 (ATT) and 103-106 (SANM). Residue His-135 is the Proton donor/acceptor of the active site. His-136 lines the (S)-2,3,4,5-tetrahydrodipicolinate pocket. The active-site Proton donor is Lys-139. Residue 145 to 146 (GT) participates in (S)-2,3,4,5-tetrahydrodipicolinate binding.

The protein belongs to the DapB family.

The protein localises to the cytoplasm. The catalysed reaction is (S)-2,3,4,5-tetrahydrodipicolinate + NAD(+) + H2O = (2S,4S)-4-hydroxy-2,3,4,5-tetrahydrodipicolinate + NADH + H(+). It carries out the reaction (S)-2,3,4,5-tetrahydrodipicolinate + NADP(+) + H2O = (2S,4S)-4-hydroxy-2,3,4,5-tetrahydrodipicolinate + NADPH + H(+). The protein operates within amino-acid biosynthesis; L-lysine biosynthesis via DAP pathway; (S)-tetrahydrodipicolinate from L-aspartate: step 4/4. In terms of biological role, catalyzes the conversion of 4-hydroxy-tetrahydrodipicolinate (HTPA) to tetrahydrodipicolinate. This is 4-hydroxy-tetrahydrodipicolinate reductase from Staphylococcus aureus (strain JH1).